A 583-amino-acid chain; its full sequence is Aspartate--tRNA ligase (583 aa).

Glu-174 is an L-aspartate binding site. The segment at 198–201 is aspartate; the sequence is QITK. Arg-220 contributes to the L-aspartate binding site. ATP contacts are provided by residues 220 to 222 and Gln-229; that span reads RDE. His-443 provides a ligand contact to L-aspartate. Position 477 (Glu-477) interacts with ATP. An L-aspartate-binding site is contributed by Arg-484. 529-532 contacts ATP; sequence GLDR.

This sequence belongs to the class-II aminoacyl-tRNA synthetase family. Type 1 subfamily. Homodimer.

The protein localises to the cytoplasm. It carries out the reaction tRNA(Asp) + L-aspartate + ATP = L-aspartyl-tRNA(Asp) + AMP + diphosphate. Functionally, catalyzes the attachment of L-aspartate to tRNA(Asp) in a two-step reaction: L-aspartate is first activated by ATP to form Asp-AMP and then transferred to the acceptor end of tRNA(Asp). The protein is Aspartate--tRNA ligase of Streptococcus thermophilus (strain ATCC BAA-250 / LMG 18311).